Consider the following 1182-residue polypeptide: WD repeat-containing protein on Y chromosome (1182 aa).

8 WD repeats span residues 155-199 (EEIT…LRSA), 323-362 (RIPLGVSVFYVSEIKNILVTGGPDTFVRIWDVYISSEPSA), 366-405 (GHNGGIVAVFVQPEENKVYSVDYHKIIKVWDLQEHTLLQT), 456-495 (THAAPVSVVLYNRLFRNIVTCGLDSYIIVWDPWTGRRKII), 508-547 (TIDIEITAACFDPLEQFLLTGARDGSLKIWNYNNAVVVRN), 595-635 (FHTD…RRYN), 740-779 (KTGDCVLTMATDRKNRFLYTGTAFGYIKVWHIVNYCIPKA), and 823-862 (GHLKAINSIGFINLPKIIFSGSHDYSCRLWTQGGRYLGTL). Positions 1031-1182 (TKAGANLDQP…PKAKTDRETH (152 aa)) are disordered. Composition is skewed to low complexity over residues 1079–1092 (GVSSGYGKVSVSQG) and 1103–1121 (TTSLSKPKTSSSPSKPKGS).

In Drosophila virilis (Fruit fly), this protein is WD repeat-containing protein on Y chromosome.